A 250-amino-acid polypeptide reads, in one-letter code: Probable S-methyl-5'-thioinosine phosphorylase (250 aa).

Residues T14 and 56–57 each bind phosphate; that span reads RH. M189 contacts substrate. Phosphate is bound at residue T190. 213–215 lines the substrate pocket; it reads NWA.

It belongs to the PNP/MTAP phosphorylase family. MTAP subfamily. In terms of assembly, homotrimer.

It catalyses the reaction S-methyl-5'-thioinosine + phosphate = 5-(methylsulfanyl)-alpha-D-ribose 1-phosphate + hypoxanthine. It functions in the pathway purine metabolism; purine nucleoside salvage. Functionally, catalyzes the reversible phosphorylation of S-methyl-5'-thioinosine (MTI) to hypoxanthine and 5-methylthioribose-1-phosphate. Involved in the breakdown of S-methyl-5'-thioadenosine (MTA), a major by-product of polyamine biosynthesis. Catabolism of (MTA) occurs via deamination to MTI and phosphorolysis to hypoxanthine. This chain is Probable S-methyl-5'-thioinosine phosphorylase, found in Xanthomonas campestris pv. campestris (strain ATCC 33913 / DSM 3586 / NCPPB 528 / LMG 568 / P 25).